The chain runs to 328 residues: B3 domain-containing protein At5g60140 (328 aa).

The TF-B3 DNA-binding region spans 13 to 109 (SKFFKPYLPS…FFNFSIFDHE (97 aa)). The disordered stretch occupies residues 145–221 (LNSDDSDDSD…EDEDDLEDED (77 aa)). Composition is skewed to acidic residues over residues 148–182 (DDSD…AEDG) and 190–221 (GLED…EDED).

The protein localises to the nucleus. In Arabidopsis thaliana (Mouse-ear cress), this protein is B3 domain-containing protein At5g60140.